The chain runs to 233 residues: Ribonuclease HII (233 aa).

An RNase H type-2 domain is found at 21–211; that stretch reads KVIAGVDEVG…LDALPQWRHL (191 aa). The a divalent metal cation site is built by D27, E28, and D119.

This sequence belongs to the RNase HII family. The cofactor is Mn(2+). Mg(2+) serves as cofactor.

It is found in the cytoplasm. It catalyses the reaction Endonucleolytic cleavage to 5'-phosphomonoester.. Functionally, endonuclease that specifically degrades the RNA of RNA-DNA hybrids. In Streptomyces avermitilis (strain ATCC 31267 / DSM 46492 / JCM 5070 / NBRC 14893 / NCIMB 12804 / NRRL 8165 / MA-4680), this protein is Ribonuclease HII.